The following is a 471-amino-acid chain: Replication factor C large subunit (471 aa).

Residue 44–51 (GSPGIGKT) participates in ATP binding. Over residues 422–431 (RTDAAVDHSE) the composition is skewed to basic and acidic residues. The disordered stretch occupies residues 422–471 (RTDAAVDHSEGAFAGAVREDNTDEDSAADETTDGDEDTGADSQRGLDEFF). Residues 442 to 460 (NTDEDSAADETTDGDEDTG) show a composition bias toward acidic residues.

It belongs to the activator 1 small subunits family. RfcL subfamily. Heteromultimer composed of small subunits (RfcS) and large subunits (RfcL).

Functionally, part of the RFC clamp loader complex which loads the PCNA sliding clamp onto DNA. This is Replication factor C large subunit from Halobacterium salinarum (strain ATCC 29341 / DSM 671 / R1).